We begin with the raw amino-acid sequence, 185 residues long: UPF0301 protein Shew_1144 (185 aa).

This sequence belongs to the UPF0301 (AlgH) family.

This Shewanella loihica (strain ATCC BAA-1088 / PV-4) protein is UPF0301 protein Shew_1144.